The sequence spans 181 residues: MIKGLQNYSQQALRTARYIGQGFMVTLDHMNRTASTIQYPYEKLIPSERFRGRIHFEFDKCIACEVCVRVCPINLPVVDWEFQKSMKKKQLKSYSIDFGVCIFCGNCVEYCPTNCLSMTEEYELSAYDRHELNYDHVALGRLPFPAAKDPMVQPVYGIGYLEKGIVERTKGSKTITTLSTN.

4Fe-4S ferredoxin-type domains lie at 52-81 and 92-121; these read GRIH…VDWE and KSYS…MTEE. [4Fe-4S] cluster contacts are provided by Cys-61, Cys-64, Cys-67, Cys-71, Cys-101, Cys-104, Cys-107, and Cys-111.

Belongs to the complex I 23 kDa subunit family. NDH is composed of at least 16 different subunits, 5 of which are encoded in the nucleus. It depends on [4Fe-4S] cluster as a cofactor.

The protein resides in the plastid. It localises to the chloroplast thylakoid membrane. It carries out the reaction a plastoquinone + NADH + (n+1) H(+)(in) = a plastoquinol + NAD(+) + n H(+)(out). The catalysed reaction is a plastoquinone + NADPH + (n+1) H(+)(in) = a plastoquinol + NADP(+) + n H(+)(out). NDH shuttles electrons from NAD(P)H:plastoquinone, via FMN and iron-sulfur (Fe-S) centers, to quinones in the photosynthetic chain and possibly in a chloroplast respiratory chain. The immediate electron acceptor for the enzyme in this species is believed to be plastoquinone. Couples the redox reaction to proton translocation, and thus conserves the redox energy in a proton gradient. The chain is NAD(P)H-quinone oxidoreductase subunit I, chloroplastic from Zygnema circumcarinatum (Green alga).